Consider the following 1066-residue polypeptide: Protein sts5 (1066 aa).

The segment covering 18–28 (QQDPSDAQSSP) has biased composition (low complexity). Disordered stretches follow at residues 18–40 (QQDP…SLTT), 154–178 (ATST…SPNS), and 247–286 (SNFR…RKNL). Over residues 29–40 (TFVPSANPSLTT) the composition is skewed to polar residues. The residue at position 157 (Thr157) is a Phosphothreonine. A compositionally biased stretch (low complexity) spans 168–178 (HSVASVSSPNS). Position 262 is a phosphothreonine (Thr262). A Phosphoserine modification is found at Ser264. Residues 270 to 280 (SGSGFSSGGSG) are compositionally biased toward gly residues. Thr377 bears the Phosphothreonine mark. Residues 454 to 480 (SSAANKERQTSSGNQGSSNNSGNDKPK) are disordered. Over residues 464–476 (SSGNQGSSNNSGN) the composition is skewed to low complexity. The CSD2 domain occupies 482–556 (VWFKPSDKRV…AQVSALLHDT (75 aa)). One can recognise an RNB domain in the interval 618–934 (NINSSSATDF…VHYQLQLLLR (317 aa)). A DIS3L2 C-terminal domain is found at 983–1033 (QDGLVCFVAPSYFDVFFPSLGMEKRVHLDLLNLTHVRFEEDQGILSLYDES).

The protein belongs to the RNR ribonuclease family. In terms of assembly, interacts with serine/threonine phosphatase ppe1, protein kinase C and an osmosensing MAP kinase.

The protein resides in the cytoplasm. Its function is as follows. Required for the maintenance of cell shape during interphase. Required for localization of cortical actin to the growing tips before mitosis. This is Protein sts5 (sts5) from Schizosaccharomyces pombe (strain 972 / ATCC 24843) (Fission yeast).